The chain runs to 152 residues: MNFEGKLVGSDLKVAIVVSRFNDFITNRLLDGAKDTLIRHEVPEANIDVAYVPGAFEIPLVAKKLAKKNDYDAVITLGCVIRGSTSHYDYVCNEVAKGVSKANDVTDTPVIFGILTTENIEQAVERAGTKAGNKGAEAAVSAIEMANLLREI.

Residues Phe-21, 55-57 (AFE), and 79-81 (CVI) contribute to the 5-amino-6-(D-ribitylamino)uracil site. 84–85 (ST) is a binding site for (2S)-2-hydroxy-3-oxobutyl phosphate. His-87 (proton donor) is an active-site residue. A 5-amino-6-(D-ribitylamino)uracil-binding site is contributed by Phe-112. Arg-126 lines the (2S)-2-hydroxy-3-oxobutyl phosphate pocket.

The protein belongs to the DMRL synthase family. In terms of assembly, forms an icosahedral capsid composed of 60 subunits, arranged as a dodecamer of pentamers.

The enzyme catalyses (2S)-2-hydroxy-3-oxobutyl phosphate + 5-amino-6-(D-ribitylamino)uracil = 6,7-dimethyl-8-(1-D-ribityl)lumazine + phosphate + 2 H2O + H(+). Its pathway is cofactor biosynthesis; riboflavin biosynthesis; riboflavin from 2-hydroxy-3-oxobutyl phosphate and 5-amino-6-(D-ribitylamino)uracil: step 1/2. In terms of biological role, catalyzes the formation of 6,7-dimethyl-8-ribityllumazine by condensation of 5-amino-6-(D-ribitylamino)uracil with 3,4-dihydroxy-2-butanone 4-phosphate. This is the penultimate step in the biosynthesis of riboflavin. The protein is 6,7-dimethyl-8-ribityllumazine synthase of Staphylococcus saprophyticus subsp. saprophyticus (strain ATCC 15305 / DSM 20229 / NCIMB 8711 / NCTC 7292 / S-41).